The primary structure comprises 231 residues: Uridylate cyclase (231 aa).

The Guanylate cyclase domain maps to 46–178 (TVLYADLDGS…RAANYAAKLT (133 aa)). Residue tyrosine 49 participates in a ribonucleoside 5'-triphosphate binding. Residues aspartate 51 and aspartate 95 each coordinate Mn(2+). Arginine 96 lines the a ribonucleoside 5'-triphosphate pocket.

Belongs to the adenylyl cyclase class-4/guanylyl cyclase family. Pyrimidine cyclase subfamily. As to quaternary structure, homodimer. The cofactor is Mn(2+).

Its subcellular location is the cytoplasm. It carries out the reaction UTP = 3',5'-cyclic UMP + diphosphate. Functionally, pycsar (pyrimidine cyclase system for antiphage resistance) provides immunity against bacteriophage. The pyrimidine cyclase (PycC) synthesizes cyclic nucleotides in response to infection; these serve as specific second messenger signals. The signal activates the adjacent effector, leading to bacterial cell death and abortive phage infection. A clade B Pycsar system. The pyrimidine cyclase gene of a two-gene Pycsar system, generates cyclic UMP (cUMP) from UTP probably in response to bacteriophage infection. Expression of this and adjacent effector XpPycTIR (AC P0DV29) confers resistance to bacteriophage T7. When cells expressing the Pycsar system are infected phage T7 at low multiplicity of infection (0.2 MOI) the culture survives, at 2.0 MOI bacteria enter growth arrest. The same cells enter growth arrest after exposure to 2.5 mM cUMP but not cCMP; the effector protein responds only to the cUMP produced by its cognate NTP cyclase. The polypeptide is Uridylate cyclase (Xanthomonas perforans).